Here is a 518-residue protein sequence, read N- to C-terminus: UNC5C-like protein (518 aa).

Over 1–10 (MSPQESSVQP) the chain is Extracellular. Residues 11–31 (SQFLLLVGIPVASALLLAQCL) traverse the membrane as a helical; Signal-anchor for type III membrane protein segment. Topologically, residues 32–518 (RWHCCQWLPG…NHGLELDEKL (487 aa)) are cytoplasmic. One can recognise a ZU5 domain in the interval 102–237 (VFSAREVDHR…FSLYTCVLEA (136 aa)). The tract at residues 186-400 (QQPSQACAYS…ETWAVPPPVS (215 aa)) is interaction with RELA and NFKB1. The peptidase S68 stretch occupies residues 208–235 (PLGQPGTHISRDECRILLSHFSLYTCVL). Active-site residues include His227 and Ser229. A Death domain is found at 415-494 (QLQMLLEPNS…SAIQNYLNRS (80 aa)).

Belongs to the unc-5 family. In terms of assembly, interacts with p65/RELA and NFKB1.

The protein localises to the membrane. Its subcellular location is the cytoplasm. Functionally, inhibits NF-kappa-B-dependent transcription by impairing NF-kappa-B binding to its targets. This chain is UNC5C-like protein (Unc5cl), found in Mus musculus (Mouse).